The primary structure comprises 616 residues: Dihydroxy-acid dehydratase (616 aa).

D81 is a binding site for Mg(2+). C122 contacts [2Fe-2S] cluster. Residues D123 and K124 each contribute to the Mg(2+) site. At K124 the chain carries N6-carboxylysine. C195 serves as a coordination point for [2Fe-2S] cluster. A Mg(2+)-binding site is contributed by E491. Catalysis depends on S517, which acts as the Proton acceptor.

It belongs to the IlvD/Edd family. In terms of assembly, homodimer. It depends on [2Fe-2S] cluster as a cofactor. Mg(2+) serves as cofactor.

It catalyses the reaction (2R)-2,3-dihydroxy-3-methylbutanoate = 3-methyl-2-oxobutanoate + H2O. The catalysed reaction is (2R,3R)-2,3-dihydroxy-3-methylpentanoate = (S)-3-methyl-2-oxopentanoate + H2O. Its pathway is amino-acid biosynthesis; L-isoleucine biosynthesis; L-isoleucine from 2-oxobutanoate: step 3/4. It functions in the pathway amino-acid biosynthesis; L-valine biosynthesis; L-valine from pyruvate: step 3/4. Functionally, functions in the biosynthesis of branched-chain amino acids. Catalyzes the dehydration of (2R,3R)-2,3-dihydroxy-3-methylpentanoate (2,3-dihydroxy-3-methylvalerate) into 2-oxo-3-methylpentanoate (2-oxo-3-methylvalerate) and of (2R)-2,3-dihydroxy-3-methylbutanoate (2,3-dihydroxyisovalerate) into 2-oxo-3-methylbutanoate (2-oxoisovalerate), the penultimate precursor to L-isoleucine and L-valine, respectively. The polypeptide is Dihydroxy-acid dehydratase (Blochmanniella pennsylvanica (strain BPEN)).